The following is a 286-amino-acid chain: Pantothenate synthetase (286 aa).

31–38 is an ATP binding site; it reads MGALHEGH. The Proton donor role is filled by H38. Q65 contacts (R)-pantoate. Q65 contributes to the beta-alanine binding site. An ATP-binding site is contributed by 153 to 156; the sequence is GEKD. Residue Q159 coordinates (R)-pantoate. 190-193 is a binding site for ATP; sequence LSSR.

The protein belongs to the pantothenate synthetase family. Homodimer.

The protein localises to the cytoplasm. The enzyme catalyses (R)-pantoate + beta-alanine + ATP = (R)-pantothenate + AMP + diphosphate + H(+). The protein operates within cofactor biosynthesis; (R)-pantothenate biosynthesis; (R)-pantothenate from (R)-pantoate and beta-alanine: step 1/1. Functionally, catalyzes the condensation of pantoate with beta-alanine in an ATP-dependent reaction via a pantoyl-adenylate intermediate. This is Pantothenate synthetase from Corynebacterium diphtheriae (strain ATCC 700971 / NCTC 13129 / Biotype gravis).